The following is a 72-amino-acid chain: DNA-directed RNA polymerase subunit epsilon (72 aa).

Belongs to the RNA polymerase subunit epsilon family. As to quaternary structure, RNAP is composed of a core of 2 alpha, a beta and a beta' subunit. The core is associated with a delta subunit, and at least one of epsilon or omega. When a sigma factor is associated with the core the holoenzyme is formed, which can initiate transcription.

It catalyses the reaction RNA(n) + a ribonucleoside 5'-triphosphate = RNA(n+1) + diphosphate. Its function is as follows. A non-essential component of RNA polymerase (RNAP). The polypeptide is DNA-directed RNA polymerase subunit epsilon (Staphylococcus haemolyticus (strain JCSC1435)).